The following is a 293-amino-acid chain: Beta-lactamase (293 aa).

The signal sequence occupies residues 1–27 (MRFTATVLSRVATGLALGLSMATASLA). The Acyl-ester intermediate role is filled by Ser-74. 238 to 240 (KSG) contributes to the substrate binding site.

This sequence belongs to the class-A beta-lactamase family.

The protein resides in the periplasm. The enzyme catalyses a beta-lactam + H2O = a substituted beta-amino acid. Its function is as follows. Hydrolyzes beta-lactams antibiotics. Rates of hydrolysis relative to benzylpenicillin =100: ampicillin = 27, carbenicillin = 25, cloxacillin = 0, cephaloridine = 4. The polypeptide is Beta-lactamase (Rhodobacter capsulatus (Rhodopseudomonas capsulata)).